The primary structure comprises 368 residues: N-acetylneuraminate epimerase (368 aa).

Residues 1-19 form the signal peptide; sequence MNKTIMALAIMMASFAANA. Kelch repeat units lie at residues 40-84, 86-137, 139-173, 174-219, 222-265, 287-336, and 338-367; these read TVYI…AFID, NLYV…FVHN, KAYV…KINA, HYFD…VNKG, TWLI…VAGG, ENYQ…PWNN, and LLII…VTVQ. Glu228 serves as the catalytic Proton acceptor.

The protein belongs to the NanM family. As to quaternary structure, homodimer.

The protein localises to the periplasm. The catalysed reaction is N-acetyl-alpha-neuraminate = N-acetyl-beta-neuraminate. In terms of biological role, converts alpha-N-acetylneuranimic acid (Neu5Ac) to the beta-anomer, accelerating the equilibrium between the alpha- and beta-anomers. Probably facilitates sialidase-negative bacteria to compete successfully for limited amounts of extracellular Neu5Ac, which is likely taken up in the beta-anomer. In addition, the rapid removal of sialic acid from solution might be advantageous to the bacterium to damp down host responses. The protein is N-acetylneuraminate epimerase of Shigella sonnei (strain Ss046).